The primary structure comprises 137 residues: Ciliary microtubule inner protein 1 (137 aa).

In terms of tissue distribution, expressed in airway epithelial cells, renal tubular cells, pancreatic acinar cells and epithelial cells of the stomach, duodenum, and gallbladder (at protein level).

It is found in the cell projection. The protein localises to the cilium. The protein is Ciliary microtubule inner protein 1 of Homo sapiens (Human).